The primary structure comprises 894 residues: DNA mismatch repair protein MutS (894 aa).

Residue 607-614 (GPNMSGKS) coordinates ATP.

This sequence belongs to the DNA mismatch repair MutS family.

Functionally, this protein is involved in the repair of mismatches in DNA. It is possible that it carries out the mismatch recognition step. This protein has a weak ATPase activity. The sequence is that of DNA mismatch repair protein MutS from Bacillus cereus (strain ZK / E33L).